The primary structure comprises 250 residues: DNA repair protein RecO (250 aa).

The protein belongs to the RecO family.

Functionally, involved in DNA repair and RecF pathway recombination. The polypeptide is DNA repair protein RecO (Beijerinckia indica subsp. indica (strain ATCC 9039 / DSM 1715 / NCIMB 8712)).